Consider the following 214-residue polypeptide: Pyridoxine/pyridoxamine 5'-phosphate oxidase (214 aa).

Residues 8–11 (RLSY) and Arg-66 each bind substrate. FMN is bound by residues 61 to 66 (RTVLLR), 76 to 77 (FT), Lys-83, and Gln-105. Substrate is bound by residues Tyr-123, Arg-127, and Ser-131. Positions 126-146 (SRPRESQLAAHASDPQSAPVS) are disordered. FMN contacts are provided by residues 141-142 (QS) and Trp-187. 193 to 195 (RMH) contributes to the substrate binding site. Arg-197 serves as a coordination point for FMN.

Belongs to the pyridoxamine 5'-phosphate oxidase family. As to quaternary structure, homodimer. Requires FMN as cofactor.

It catalyses the reaction pyridoxamine 5'-phosphate + O2 + H2O = pyridoxal 5'-phosphate + H2O2 + NH4(+). The catalysed reaction is pyridoxine 5'-phosphate + O2 = pyridoxal 5'-phosphate + H2O2. Its pathway is cofactor metabolism; pyridoxal 5'-phosphate salvage; pyridoxal 5'-phosphate from pyridoxamine 5'-phosphate: step 1/1. The protein operates within cofactor metabolism; pyridoxal 5'-phosphate salvage; pyridoxal 5'-phosphate from pyridoxine 5'-phosphate: step 1/1. Functionally, catalyzes the oxidation of either pyridoxine 5'-phosphate (PNP) or pyridoxamine 5'-phosphate (PMP) into pyridoxal 5'-phosphate (PLP). This is Pyridoxine/pyridoxamine 5'-phosphate oxidase from Deinococcus deserti (strain DSM 17065 / CIP 109153 / LMG 22923 / VCD115).